We begin with the raw amino-acid sequence, 1055 residues long: RapA guanosine triphosphatase-activating protein 1 (1055 aa).

6 disordered regions span residues 76–100, 256–292, 418–525, 544–570, 603–629, and 943–969; these read LSPQ…EEER, NHQP…SSLT, QQLL…FLGV, THAT…SPPL, TTQL…PPSE, and NNNS…NLPT. Residues 89-100 are compositionally biased toward basic and acidic residues; that stretch reads QHEKITPEEEER. 3 stretches are compositionally biased toward low complexity: residues 262–292, 442–455, and 469–482; these read STPR…SSLT, DFNL…NNNN, and TTTT…NNNN. Polar residues predominate over residues 483-494; that stretch reads ISPQHSGTSGSP. Composition is skewed to low complexity over residues 603–622 and 943–966; these read TTQL…TSQP and NNNS…SDSN. The Rap-GAP domain occupies 779 to 1048; it reads LIQFEAKNIH…RTRKEFLHSF (270 aa).

The protein localises to the cytoplasm. Its subcellular location is the cell cortex. Mediates the deactivation of rap1 and plays an important role in spatially and temporally regulating cell adhesion and chemotaxis by controlling attachment disassembly in the leading edge through the regulation of myosin II assembly and disassembly. Overexpression leads to defective chemotaxis. This is RapA guanosine triphosphatase-activating protein 1 (rapgap1) from Dictyostelium discoideum (Social amoeba).